Reading from the N-terminus, the 258-residue chain is MMRVKAKKALGQHFLRDLSIAERIADTLSEHKALPVLEIGPGMGVLTQFLLRKGHDVRVIEIDGESVSYLREEFPELSDRIIEGDFLHYPLSELFPGGRQYCLIGNYPYNISSQIFFRLLDVREQIPCCSGMLQREVAMRLASPPGKKDYGILSVLLQLWYNIEYLFTVDASVFDPPPKVQSGVIRLTRNDRKELPCSEKALKTVVKTAFGQRRKTLRNSLRGILPAGFDRFDEPVFSKRPEQLSPDDFIALTLLLQQ.

Histidine 13, leucine 15, glycine 40, glutamate 61, aspartate 85, and asparagine 106 together coordinate S-adenosyl-L-methionine.

It belongs to the class I-like SAM-binding methyltransferase superfamily. rRNA adenine N(6)-methyltransferase family. RsmA subfamily.

The protein resides in the cytoplasm. It catalyses the reaction adenosine(1518)/adenosine(1519) in 16S rRNA + 4 S-adenosyl-L-methionine = N(6)-dimethyladenosine(1518)/N(6)-dimethyladenosine(1519) in 16S rRNA + 4 S-adenosyl-L-homocysteine + 4 H(+). Specifically dimethylates two adjacent adenosines (A1518 and A1519) in the loop of a conserved hairpin near the 3'-end of 16S rRNA in the 30S particle. May play a critical role in biogenesis of 30S subunits. The protein is Ribosomal RNA small subunit methyltransferase A of Porphyromonas gingivalis (strain ATCC 33277 / DSM 20709 / CIP 103683 / JCM 12257 / NCTC 11834 / 2561).